Here is a 119-residue protein sequence, read N- to C-terminus: MKQFGFTRLMRLVDPGDFKQIFAAGERVSSKAFTVLYHSNSLEYPRLGMAIPRKHFSRAVDRNRIKRLVRESFRQRQQVLGGRDLVVLSKPGINRHPNSDLLRCLERQWIGLVKQCSDS.

This sequence belongs to the RnpA family. Consists of a catalytic RNA component (M1 or rnpB) and a protein subunit.

It carries out the reaction Endonucleolytic cleavage of RNA, removing 5'-extranucleotides from tRNA precursor.. Its function is as follows. RNaseP catalyzes the removal of the 5'-leader sequence from pre-tRNA to produce the mature 5'-terminus. It can also cleave other RNA substrates such as 4.5S RNA. The protein component plays an auxiliary but essential role in vivo by binding to the 5'-leader sequence and broadening the substrate specificity of the ribozyme. The chain is Ribonuclease P protein component from Nitrosococcus oceani (strain ATCC 19707 / BCRC 17464 / JCM 30415 / NCIMB 11848 / C-107).